The following is a 294-amino-acid chain: Cytidine deaminase (294 aa).

CMP/dCMP-type deaminase domains lie at Asp-48–Lys-168 and Leu-186–Gly-294. Position 89–91 (Asn-89–Glu-91) interacts with substrate. Position 102 (His-102) interacts with Zn(2+). Glu-104 serves as the catalytic Proton donor. Positions 129 and 132 each coordinate Zn(2+).

The protein belongs to the cytidine and deoxycytidylate deaminase family. As to quaternary structure, homodimer. Zn(2+) is required as a cofactor.

It carries out the reaction cytidine + H2O + H(+) = uridine + NH4(+). It catalyses the reaction 2'-deoxycytidine + H2O + H(+) = 2'-deoxyuridine + NH4(+). Its function is as follows. This enzyme scavenges exogenous and endogenous cytidine and 2'-deoxycytidine for UMP synthesis. This chain is Cytidine deaminase, found in Salmonella newport (strain SL254).